A 590-amino-acid polypeptide reads, in one-letter code: L-fucose isomerase (590 aa).

Active-site proton acceptor residues include glutamate 337 and aspartate 361. Mn(2+) is bound by residues glutamate 337, aspartate 361, and histidine 528.

Belongs to the L-fucose isomerase family. Requires Mn(2+) as cofactor.

The protein localises to the cytoplasm. It carries out the reaction L-fucose = L-fuculose. Its pathway is carbohydrate degradation; L-fucose degradation; L-lactaldehyde and glycerone phosphate from L-fucose: step 1/3. Functionally, converts the aldose L-fucose into the corresponding ketose L-fuculose. The sequence is that of L-fucose isomerase from Bacteroides fragilis (strain ATCC 25285 / DSM 2151 / CCUG 4856 / JCM 11019 / LMG 10263 / NCTC 9343 / Onslow / VPI 2553 / EN-2).